The following is a 361-amino-acid chain: Actin maturation protease (361 aa).

A disordered region spans residues 1 to 75; the sequence is MTSPCSFPLK…PPPPPLPSAV (75 aa). Composition is skewed to pro residues over residues 24 to 33 and 52 to 72; these read NIPPPLPLNP and PLPPPPPPPAPPPPPPPPPLP. The interval 134–254 is peptidase C39-like; sequence SCIQEGPQCG…WAVSAGVLIG (121 aa). Residue Cys-142 is part of the active site.

Belongs to the ACTMAP family. In terms of assembly, interacts (via N-terminus) with PFN2 isoforms 1/IIa and 2/IIb; the interactions may facilitate efficient cleavage of the acetylated N-terminus of immature actin. Interacts with PFN1.

The protein resides in the cytoplasm. It catalyses the reaction N-terminal N(alpha)-acetyl-L-methionyl-L-aspartyl-[protein] + H2O = N-terminal L-aspartyl-[protein] + N-acetyl-L-methionine. It carries out the reaction N-terminal N(alpha)-acetyl-L-methionyl-L-glutamyl-[protein] + H2O = N-terminal L-glutamyl-[protein] + N-acetyl-L-methionine. The enzyme catalyses N-terminal N(alpha)-acetyl-L-cysteinyl-L-aspartyl-[protein] + H2O = N-terminal L-aspartyl-[protein] + N-acetyl-L-cysteine. The catalysed reaction is N-terminal N(alpha)-acetyl-L-cysteinyl-L-glutamyl-[protein] + H2O = N-terminal L-glutamyl-[protein] + N-acetyl-L-cysteine. Actin maturation protease that specifically mediates the cleavage of immature acetylated N-terminal actin, thereby contributing to actin maturation. Cleaves N-terminal acetylated methionine of immature cytoplasmic beta- and gamma-actins Actb and Actg1 after translation. Cleaves N-terminal acetylated cysteine of muscle alpha-actins Acta1, Actc1 and Acta2 after canonical removal of N-terminal methionine. This chain is Actin maturation protease, found in Mus musculus (Mouse).